Here is a 145-residue protein sequence, read N- to C-terminus: Hemoglobin subunit beta-A (145 aa).

The Globin domain maps to 1 to 145; sequence MLTAEEKAAV…VANALAHRYH (145 aa). His-62 and His-91 together coordinate heme b.

This sequence belongs to the globin family. Heterotetramer of two alpha chains and two beta chains. As to expression, red blood cells.

Involved in oxygen transport from the lung to the various peripheral tissues. This is Hemoglobin subunit beta-A from Capra hircus (Goat).